Reading from the N-terminus, the 334-residue chain is tRNA N6-adenosine threonylcarbamoyltransferase (334 aa).

Fe cation-binding residues include His111 and His115. Substrate contacts are provided by residues 134–138 (IVSGG), Asp167, Gly180, Asp184, and Asn272. Asp300 contributes to the Fe cation binding site.

Belongs to the KAE1 / TsaD family. Requires Fe(2+) as cofactor.

It localises to the cytoplasm. The enzyme catalyses L-threonylcarbamoyladenylate + adenosine(37) in tRNA = N(6)-L-threonylcarbamoyladenosine(37) in tRNA + AMP + H(+). Its function is as follows. Required for the formation of a threonylcarbamoyl group on adenosine at position 37 (t(6)A37) in tRNAs that read codons beginning with adenine. Is involved in the transfer of the threonylcarbamoyl moiety of threonylcarbamoyl-AMP (TC-AMP) to the N6 group of A37, together with TsaE and TsaB. TsaD likely plays a direct catalytic role in this reaction. In Dictyoglomus turgidum (strain DSM 6724 / Z-1310), this protein is tRNA N6-adenosine threonylcarbamoyltransferase.